Here is a 144-residue protein sequence, read N- to C-terminus: MDKYLIINTKILPEVFGKVLQAKELLRTGKAKDITEASKIVGISRSSYYKYKDFVFSVLEGTHVQKATIGFLLSHKAGTLSRILDRIAQINGNILTINQDIPVNNAASVTITFDISNMVVELNEFLREMQEMDNVVKVSLIAME.

An ACT domain is found at 68 to 143; the sequence is TIGFLLSHKA…NVVKVSLIAM (76 aa).

It belongs to the UPF0735 family.

The sequence is that of UPF0735 ACT domain-containing protein NT01CX_1681 from Clostridium novyi (strain NT).